The primary structure comprises 132 residues: Protein LEKR1 (132 aa).

A coiled-coil region spans residues 37 to 116; it reads FKAMEEKVKA…KKQLSHLQDE (80 aa).

This chain is Protein LEKR1 (LEKR1), found in Homo sapiens (Human).